The chain runs to 673 residues: Glycine--tRNA ligase beta subunit (673 aa).

This sequence belongs to the class-II aminoacyl-tRNA synthetase family. In terms of assembly, tetramer of two alpha and two beta subunits.

The protein localises to the cytoplasm. The enzyme catalyses tRNA(Gly) + glycine + ATP = glycyl-tRNA(Gly) + AMP + diphosphate. The protein is Glycine--tRNA ligase beta subunit of Lactococcus lactis subsp. cremoris (strain SK11).